A 343-amino-acid chain; its full sequence is Aspartate carbamoyltransferase catalytic subunit (343 aa).

The carbamoyl phosphate site is built by Arg91 and Thr92. Lys119 is an L-aspartate binding site. Carbamoyl phosphate-binding residues include Arg141, His171, and Gln174. Positions 204 and 259 each coordinate L-aspartate. Positions 300 and 301 each coordinate carbamoyl phosphate.

Belongs to the aspartate/ornithine carbamoyltransferase superfamily. ATCase family. Heterododecamer (2C3:3R2) of six catalytic PyrB chains organized as two trimers (C3), and six regulatory PyrI chains organized as three dimers (R2).

It catalyses the reaction carbamoyl phosphate + L-aspartate = N-carbamoyl-L-aspartate + phosphate + H(+). The protein operates within pyrimidine metabolism; UMP biosynthesis via de novo pathway; (S)-dihydroorotate from bicarbonate: step 2/3. Its function is as follows. Catalyzes the condensation of carbamoyl phosphate and aspartate to form carbamoyl aspartate and inorganic phosphate, the committed step in the de novo pyrimidine nucleotide biosynthesis pathway. The protein is Aspartate carbamoyltransferase catalytic subunit of Burkholderia mallei (strain NCTC 10247).